The following is a 273-amino-acid chain: Formamidopyrimidine-DNA glycosylase (273 aa).

Residue P2 is the Schiff-base intermediate with DNA of the active site. Residue E3 is the Proton donor of the active site. The active-site Proton donor; for beta-elimination activity is K59. DNA-binding residues include H93, R111, and R154. The FPG-type zinc finger occupies 239–273 (KVYGRGGEPCKECGHTLVRIRLAGRSTVFCPCCQV). R263 (proton donor; for delta-elimination activity) is an active-site residue.

It belongs to the FPG family. In terms of assembly, monomer. Zn(2+) serves as cofactor.

It catalyses the reaction Hydrolysis of DNA containing ring-opened 7-methylguanine residues, releasing 2,6-diamino-4-hydroxy-5-(N-methyl)formamidopyrimidine.. It carries out the reaction 2'-deoxyribonucleotide-(2'-deoxyribose 5'-phosphate)-2'-deoxyribonucleotide-DNA = a 3'-end 2'-deoxyribonucleotide-(2,3-dehydro-2,3-deoxyribose 5'-phosphate)-DNA + a 5'-end 5'-phospho-2'-deoxyribonucleoside-DNA + H(+). In terms of biological role, involved in base excision repair of DNA damaged by oxidation or by mutagenic agents. Acts as a DNA glycosylase that recognizes and removes damaged bases. Has a preference for oxidized purines, such as 7,8-dihydro-8-oxoguanine (8-oxoG). Has AP (apurinic/apyrimidinic) lyase activity and introduces nicks in the DNA strand. Cleaves the DNA backbone by beta-delta elimination to generate a single-strand break at the site of the removed base with both 3'- and 5'-phosphates. The sequence is that of Formamidopyrimidine-DNA glycosylase from Desulfitobacterium hafniense (strain DSM 10664 / DCB-2).